A 261-amino-acid chain; its full sequence is tRNA pseudouridine synthase A (261 aa).

Asp51 acts as the Nucleophile in catalysis. Tyr109 serves as a coordination point for substrate.

Belongs to the tRNA pseudouridine synthase TruA family. Homodimer.

It catalyses the reaction uridine(38/39/40) in tRNA = pseudouridine(38/39/40) in tRNA. Functionally, formation of pseudouridine at positions 38, 39 and 40 in the anticodon stem and loop of transfer RNAs. This Psychromonas ingrahamii (strain DSM 17664 / CCUG 51855 / 37) protein is tRNA pseudouridine synthase A.